The chain runs to 428 residues: Dihydroorotase (428 aa).

The Zn(2+) site is built by His59 and His61. Residues His61–Arg63 and Asn93 each bind substrate. Zn(2+)-binding residues include Asp151, His178, and His231. A substrate-binding site is contributed by Asn277. A Zn(2+)-binding site is contributed by Asp304. Residue Asp304 is part of the active site. Substrate contacts are provided by residues His308 and Phe322 to Gly323.

It belongs to the metallo-dependent hydrolases superfamily. DHOase family. Class I DHOase subfamily. The cofactor is Zn(2+).

The catalysed reaction is (S)-dihydroorotate + H2O = N-carbamoyl-L-aspartate + H(+). The protein operates within pyrimidine metabolism; UMP biosynthesis via de novo pathway; (S)-dihydroorotate from bicarbonate: step 3/3. In terms of biological role, catalyzes the reversible cyclization of carbamoyl aspartate to dihydroorotate. The sequence is that of Dihydroorotase from Halalkalibacterium halodurans (strain ATCC BAA-125 / DSM 18197 / FERM 7344 / JCM 9153 / C-125) (Bacillus halodurans).